Reading from the N-terminus, the 109-residue chain is Protein reprimo (109 aa).

2 N-linked (GlcNAc...) asparagine glycosylation sites follow: asparagine 7 and asparagine 18. Residues 56–76 (VVQIAVMCVLSLTVVFGIFFL) traverse the membrane as a helical segment. Serine 98 carries the post-translational modification Phosphoserine.

The protein belongs to the reprimo family.

It is found in the cytoplasm. The protein localises to the membrane. May be involved in the regulation of p53-dependent G2 arrest of the cell cycle. Seems to induce cell cycle arrest by inhibiting CDK1 activity and nuclear translocation of the CDC2 cyclin B1 complex. This Homo sapiens (Human) protein is Protein reprimo (RPRM).